Here is a 235-residue protein sequence, read N- to C-terminus: Large ribosomal subunit protein uL1 (235 aa).

This sequence belongs to the universal ribosomal protein uL1 family. As to quaternary structure, part of the 50S ribosomal subunit.

In terms of biological role, binds directly to 23S rRNA. The L1 stalk is quite mobile in the ribosome, and is involved in E site tRNA release. Functionally, protein L1 is also a translational repressor protein, it controls the translation of the L11 operon by binding to its mRNA. The protein is Large ribosomal subunit protein uL1 of Prochlorococcus marinus (strain AS9601).